The sequence spans 261 residues: MVSMRDLLECGVHFGHQTRRWNPKMKKFIFGERKGIYVIDLQKTLRYFRYTYNIVRDAAAEGKTILFVGTKKQAGGAIKEYAEKCGMPYVNHRWLGGMMTNFGTIRQSIRKLEVIEKMEEDGSIKLLTKKEALMLTRKKEKLLAYLGGIRYMKTQPDMIFVIDTVKEKIAVQEANRLKIPVVAPLDTNCDPDLVDFPIPGNDDAIRSVQLFCQEMAEAINEGKALREQDGEANEEQPISEEEKKEVLEEAMSEEDFEGDKE.

The interval 222 to 261 (GKALREQDGEANEEQPISEEEKKEVLEEAMSEEDFEGDKE) is disordered. Acidic residues-rich tracts occupy residues 230 to 239 (GEANEEQPIS) and 248 to 261 (EEAM…GDKE).

Belongs to the universal ribosomal protein uS2 family.

This is Small ribosomal subunit protein uS2 from Campylobacter lari (strain RM2100 / D67 / ATCC BAA-1060).